Here is a 401-residue protein sequence, read N- to C-terminus: tRNA(Ile)-lysidine synthase (401 aa).

An ATP-binding site is contributed by Ser-17–Ser-22.

Belongs to the tRNA(Ile)-lysidine synthase family.

It is found in the cytoplasm. It catalyses the reaction cytidine(34) in tRNA(Ile2) + L-lysine + ATP = lysidine(34) in tRNA(Ile2) + AMP + diphosphate + H(+). Functionally, ligates lysine onto the cytidine present at position 34 of the AUA codon-specific tRNA(Ile) that contains the anticodon CAU, in an ATP-dependent manner. Cytidine is converted to lysidine, thus changing the amino acid specificity of the tRNA from methionine to isoleucine. The sequence is that of tRNA(Ile)-lysidine synthase from Mycoplasma mycoides subsp. mycoides SC (strain CCUG 32753 / NCTC 10114 / PG1).